Consider the following 399-residue polypeptide: Lysosomal acid lipase/cholesteryl ester hydrolase (399 aa).

A signal peptide spans 1 to 27 (MKMRFLGLVVCLVLWTLHSEGSGGKLT). Residues 28–76 (AVDPETNMNVSEIISYWGFPSEEYLVETEDGYILCLNRIPHGRKNHSDK) constitute a propeptide, removed in mature form. N-linked (GlcNAc...) asparagine glycans are attached at residues Asn-36, Asn-72, Asn-101, and Asn-161. The region spanning 80–380 (PVVFLQHGLL…EWEHLDFIWG (301 aa)) is the AB hydrolase-1 domain. The Charge relay system role is filled by Ser-174. Asn-273 and Asn-321 each carry an N-linked (GlcNAc...) asparagine glycan. His-374 (charge relay system) is an active-site residue.

It belongs to the AB hydrolase superfamily. Lipase family. As to quaternary structure, monomer. In terms of processing, glycosylation is not essential for catalytic activity. In terms of tissue distribution, most abundantly expressed in brain, lung, kidney and mammary gland, a moderate expression seen in placenta and expressed at low levels in the liver and heart.

Its subcellular location is the lysosome. The enzyme catalyses a sterol ester + H2O = a sterol + a fatty acid + H(+). It carries out the reaction cholesteryl (9Z-octadecenoate) + H2O = cholesterol + (9Z)-octadecenoate + H(+). The catalysed reaction is a triacylglycerol + H2O = a 1,2-diacylglycerol + a fatty acid + H(+). It catalyses the reaction 1,2-di-(9Z-octadecenoyl)-glycerol + (9Z)-octadecenoate + H(+) = 1,2,3-tri-(9Z-octadecenoyl)-glycerol + H2O. The enzyme catalyses a 1,2-diacylglycerol + H2O = a 1-acylglycerol + a fatty acid + H(+). It carries out the reaction 1,2-di-(9Z-octadecenoyl)-glycerol + H2O = 1-(9Z-octadecenoyl)-glycerol + (9Z)-octadecenoate + H(+). The catalysed reaction is a 1,3-diacylglycerol + H2O = a 1-acylglycerol + a fatty acid + H(+). It catalyses the reaction 1,3-di-(9Z-octadecenoyl)-glycerol + H2O = 1-(9Z-octadecenoyl)-glycerol + (9Z)-octadecenoate + H(+). In terms of biological role, catalyzes the deacylation of cholesteryl ester core lipids of endocytosed low density lipoproteins to generate free fatty acids and cholesterol. Hydrolyzes triglycerides (1,2,3-triacylglycerol) and diglycerides (such as 1,2-diacylglycerol and 1,3-diacylglycerol) with preference for the acyl moieties at the sn-1 or sn-3 positions. In Homo sapiens (Human), this protein is Lysosomal acid lipase/cholesteryl ester hydrolase (LIPA).